A 223-amino-acid polypeptide reads, in one-letter code: Deoxyribose-phosphate aldolase (223 aa).

Catalysis depends on Asp89, which acts as the Proton donor/acceptor. Catalysis depends on Lys152, which acts as the Schiff-base intermediate with acetaldehyde. The active-site Proton donor/acceptor is Lys181.

This sequence belongs to the DeoC/FbaB aldolase family. DeoC type 1 subfamily.

It localises to the cytoplasm. The catalysed reaction is 2-deoxy-D-ribose 5-phosphate = D-glyceraldehyde 3-phosphate + acetaldehyde. The protein operates within carbohydrate degradation; 2-deoxy-D-ribose 1-phosphate degradation; D-glyceraldehyde 3-phosphate and acetaldehyde from 2-deoxy-alpha-D-ribose 1-phosphate: step 2/2. Functionally, catalyzes a reversible aldol reaction between acetaldehyde and D-glyceraldehyde 3-phosphate to generate 2-deoxy-D-ribose 5-phosphate. The polypeptide is Deoxyribose-phosphate aldolase (Listeria monocytogenes serovar 1/2a (strain ATCC BAA-679 / EGD-e)).